We begin with the raw amino-acid sequence, 262 residues long: Octanoyltransferase (262 aa).

Positions 41-232 (PQLPDGLLLL…SFCQVFGLQA (192 aa)) constitute a BPL/LPL catalytic domain. Substrate-binding positions include 96-103 (RGGEVTYH), 163-165 (AIG), and 176-178 (GFA). The active-site Acyl-thioester intermediate is the Cys194.

This sequence belongs to the LipB family.

The protein resides in the cytoplasm. The enzyme catalyses octanoyl-[ACP] + L-lysyl-[protein] = N(6)-octanoyl-L-lysyl-[protein] + holo-[ACP] + H(+). Its pathway is protein modification; protein lipoylation via endogenous pathway; protein N(6)-(lipoyl)lysine from octanoyl-[acyl-carrier-protein]: step 1/2. Catalyzes the transfer of endogenously produced octanoic acid from octanoyl-acyl-carrier-protein onto the lipoyl domains of lipoate-dependent enzymes. Lipoyl-ACP can also act as a substrate although octanoyl-ACP is likely to be the physiological substrate. This chain is Octanoyltransferase, found in Synechococcus sp. (strain JA-2-3B'a(2-13)) (Cyanobacteria bacterium Yellowstone B-Prime).